Consider the following 389-residue polypeptide: Serpin-Z3 (389 aa).

The RCL stretch occupies residues 337–361 (GTEAAAVSVAIMMPQCLMRNPDFVA).

Belongs to the serpin family.

Probable serine protease inhibitor. The chain is Serpin-Z3 from Arabidopsis thaliana (Mouse-ear cress).